A 249-amino-acid chain; its full sequence is Tetraspanin-7 (249 aa).

The Cytoplasmic segment spans residues 1–16; the sequence is MASRRMETKPVITCLK. The chain crosses the membrane as a helical span at residues 17–40; sequence TLLIIYSFVFWITGVILLAVGVWG. Residues 41 to 56 are Extracellular-facing; the sequence is KLTLGTYISLIAENST. N54 is a glycosylation site (N-linked (GlcNAc...) asparagine). The helical transmembrane segment at 57–75 threads the bilayer; it reads NAPYVLIGTGTTIVVFGLF. The Cytoplasmic segment spans residues 76–86; that stretch reads GCFATCRGSPW. A helical transmembrane segment spans residues 87–112; sequence MLKLYAMFLSLVFLAELVAGISGFVF. The Extracellular portion of the chain corresponds to 113–213; sequence RHEIKDTFLR…LVTSFMETNM (101 aa). N-linked (GlcNAc...) asparagine glycans are attached at residues N155, N158, N177, and N188. Residues 214 to 234 form a helical membrane-spanning segment; that stretch reads GIIAGVAFGIAFSQLIGMLLA. Residues 235–249 are Cytoplasmic-facing; that stretch reads CCLSRFITANQYEMV.

The protein belongs to the tetraspanin (TM4SF) family.

Its subcellular location is the membrane. In terms of biological role, may be involved in cell proliferation and cell motility. This is Tetraspanin-7 (Tspan7) from Mus musculus (Mouse).